The following is a 630-amino-acid chain: Putative adenylate cyclase regulatory protein (630 aa).

Residues 10–46 (CAVCREPWAEGALELFPCRHVFCTVCVVERWRCPSCQ) form an RING-type zinc finger. LRR repeat units lie at residues 184–206 (FLVH…CRLK), 207–230 (TLEA…CALP), 231–251 (QLTS…RCIH), 255–277 (KLKV…GGMR), 278–301 (SLEK…CKFS), 302–324 (NLRE…KNLI), 325–347 (NLKV…ERLV), 348–370 (NLDK…ANLS), 371–393 (NLKE…QDLN), 394–416 (NLEV…KNLS), 417–439 (KMRE…ETLK), 440–462 (GLEE…WSLH), 463–485 (HLRV…EGIT), 486–508 (GLEE…WNLR), 509–531 (NVCV…QCLT), 532–554 (GLEE…GNLR), 555–577 (NLKC…DRLV), and 578–599 (NLEK…MELM).

Functionally, may interact with adenylate cyclase to regulate its activity. May be involved in the postranscriptional regulation of genes in VSG expression sites. The polypeptide is Putative adenylate cyclase regulatory protein (ESAG8C) (Trypanosoma equiperdum).